The primary structure comprises 143 residues: Nucleoside diphosphate kinase (143 aa).

6 residues coordinate ATP: K11, F59, R87, T93, R104, and N114. Residue H117 is the Pros-phosphohistidine intermediate of the active site.

This sequence belongs to the NDK family. Homotetramer. Mg(2+) serves as cofactor.

The protein localises to the cytoplasm. It carries out the reaction a 2'-deoxyribonucleoside 5'-diphosphate + ATP = a 2'-deoxyribonucleoside 5'-triphosphate + ADP. It catalyses the reaction a ribonucleoside 5'-diphosphate + ATP = a ribonucleoside 5'-triphosphate + ADP. Functionally, major role in the synthesis of nucleoside triphosphates other than ATP. The ATP gamma phosphate is transferred to the NDP beta phosphate via a ping-pong mechanism, using a phosphorylated active-site intermediate. The chain is Nucleoside diphosphate kinase from Shewanella amazonensis (strain ATCC BAA-1098 / SB2B).